A 391-amino-acid polypeptide reads, in one-letter code: Ectodysplasin-A (391 aa).

Residues 1–21 (MGYPEVERREPLPAAAPRERG) are compositionally biased toward basic and acidic residues. The tract at residues 1-28 (MGYPEVERREPLPAAAPRERGSQGCGCR) is disordered. Topologically, residues 1-41 (MGYPEVERREPLPAAAPRERGSQGCGCRGAPARAGEGNSCR) are cytoplasmic. A helical; Signal-anchor for type II membrane protein transmembrane segment spans residues 42–62 (LFLGFFGLSLALHLLTLCCYL). At 63–391 (ELRSELRRER…AIRLGEAPAS (329 aa)) the chain is on the extracellular side. Disordered stretches follow at residues 73–130 (GAES…SQDG) and 145–245 (SYSE…GTRE). The segment covering 76 to 96 (SRFSGPGTPGTSGTLSSPGGL) has biased composition (low complexity). A Collagen-like domain is found at 180–229 (GPPGPNGPPGPPGPPGPQGPPGIPGIPGIPGTTVMGPPGPPGPPGPQGPP). Composition is skewed to pro residues over residues 181–203 (PPGPNGPPGPPGPPGPQGPPGIP) and 216–228 (PPGPPGPPGPQGP). Positions 249–385 (AVVHLQGQGS…HTTFFGAIRL (137 aa)) constitute a THD domain. Asn-313 carries N-linked (GlcNAc...) asparagine glycosylation. A disulfide bridge links Cys-332 with Cys-346. N-linked (GlcNAc...) asparagine glycosylation occurs at Asn-372.

This sequence belongs to the tumor necrosis factor family. As to quaternary structure, homotrimer. The homotrimers may then dimerize and form higher-order oligomers. In terms of processing, N-glycosylated. Post-translationally, processing by furin produces a secreted form.

It is found in the cell membrane. It localises to the secreted. Its function is as follows. Cytokine which is involved in epithelial-mesenchymal signaling during morphogenesis of ectodermal organs. Functions as a ligand activating the DEATH-domain containing receptors EDAR and EDA2R. Isoform A1 binds only to the receptor EDAR, while isoform A2 binds exclusively to the receptor EDA2R. May also play a role in cell adhesion. Isoform A1 binds only to the receptor EDAR, while isoform A2 binds exclusively to the receptor EDA2R. Functionally, isoform A2 binds exclusively to the receptor EDA2R. In Bos taurus (Bovine), this protein is Ectodysplasin-A (EDA).